Consider the following 297-residue polypeptide: Nucleotide-binding protein Bsph_0448 (297 aa).

ATP is bound at residue 19–26; sequence GMSGAGKT. 70 to 73 serves as a coordination point for GTP; that stretch reads DMRG.

Belongs to the RapZ-like family.

In terms of biological role, displays ATPase and GTPase activities. This Lysinibacillus sphaericus (strain C3-41) protein is Nucleotide-binding protein Bsph_0448.